The sequence spans 546 residues: Chaperonin GroEL (546 aa).

ATP contacts are provided by residues 29-32, 86-90, G413, 476-478, and D492; these read TLGP, DGTTT, and NAA. Residues 521-546 form a disordered region; that stretch reads RPDESGNDAGAGAQGMDPSMMGGGMM.

The protein belongs to the chaperonin (HSP60) family. In terms of assembly, forms a cylinder of 14 subunits composed of two heptameric rings stacked back-to-back. Interacts with the co-chaperonin GroES.

The protein localises to the cytoplasm. It catalyses the reaction ATP + H2O + a folded polypeptide = ADP + phosphate + an unfolded polypeptide.. Together with its co-chaperonin GroES, plays an essential role in assisting protein folding. The GroEL-GroES system forms a nano-cage that allows encapsulation of the non-native substrate proteins and provides a physical environment optimized to promote and accelerate protein folding. The sequence is that of Chaperonin GroEL from Tetragenococcus halophilus (Pediococcus halophilus).